We begin with the raw amino-acid sequence, 299 residues long: Apolipoprotein E (299 aa).

Positions 1-18 are cleaved as a signal peptide; sequence MKALWAVLVVTLLAGCRA. Tandem repeats lie at residues 74-95, 96-117, 118-139, 140-161, 162-183, 184-205, 206-223, and 224-245. Residues 74–245 form an 8 X 22 AA approximate tandem repeats region; that stretch reads VLMEDTMKEV…RLDEVREQME (172 aa). Residues 152-162 are LDL and other lipoprotein receptors binding; it reads HLRKLRKRLLR. Residue 156-159 coordinates heparin; that stretch reads LRKR. A lipid-binding and lipoprotein association region spans residues 204–273; that stretch reads AALTGQPLRE…GWFEPMMEDM (70 aa). Residue 219–226 coordinates heparin; the sequence is GERLRGRL. The specificity for association with VLDL stretch occupies residues 261-273; the sequence is RLKGWFEPMMEDM.

The protein belongs to the apolipoprotein A1/A4/E family. In terms of assembly, homotetramer. May interact with ABCA1; functionally associated with ABCA1 in the biogenesis of HDLs. May interact with APP/A4 amyloid-beta peptide; the interaction is extremely stable in vitro but its physiological significance is unclear. May interact with MAPT. May interact with MAP2. In the cerebrospinal fluid, interacts with secreted SORL1. Interacts with PMEL; this allows the loading of PMEL luminal fragment on ILVs to induce fibril nucleation. APOE exists as multiple glycosylated and sialylated glycoforms within cells and in plasma. The extent of glycosylation and sialylation are tissue and context specific. Post-translationally, glycated in plasma VLDL. In terms of processing, phosphorylated by FAM20C in the extracellular medium.

The protein localises to the secreted. It is found in the extracellular space. Its subcellular location is the extracellular matrix. It localises to the extracellular vesicle. The protein resides in the endosome. The protein localises to the multivesicular body. Functionally, APOE is an apolipoprotein, a protein associating with lipid particles, that mainly functions in lipoprotein-mediated lipid transport between organs via the plasma and interstitial fluids. APOE is a core component of plasma lipoproteins and is involved in their production, conversion and clearance. Apolipoproteins are amphipathic molecules that interact both with lipids of the lipoprotein particle core and the aqueous environment of the plasma. As such, APOE associates with chylomicrons, chylomicron remnants, very low density lipoproteins (VLDL) and intermediate density lipoproteins (IDL) but shows a preferential binding to high-density lipoproteins (HDL). It also binds a wide range of cellular receptors including the LDL receptor/LDLR and the very low-density lipoprotein receptor/VLDLR that mediate the cellular uptake of the APOE-containing lipoprotein particles. Finally, APOE also has a heparin-binding activity and binds heparan-sulfate proteoglycans on the surface of cells, a property that supports the capture and the receptor-mediated uptake of APOE-containing lipoproteins by cells. The chain is Apolipoprotein E (APOE) from Heterocephalus glaber (Naked mole rat).